The sequence spans 829 residues: Isethionate sulfite-lyase (829 aa).

In terms of domain architecture, PFL spans 31-699 (ERVFNILDSF…VVSATPNGRL (669 aa)). Residues Arg188, Gln192, 467–469 (CTE), and Arg677 contribute to the 2-hydroxyethane-1-sulfonate site. The active-site Cysteine radical intermediate is the Cys467. Catalysis depends on Glu469, which acts as the Proton acceptor. One can recognise a Glycine radical domain in the interval 706–829 (DGSSASHGAD…LIARTQHDAM (124 aa)). Position 804 is a glycine radical (Gly804).

The protein belongs to the glycyl radical enzyme (GRE) family. Homodimer. In terms of processing, requires the activating protein IslB to generate the key active site glycyl radical on Gly-804 that is involved in catalysis.

The enzyme catalyses 2-hydroxyethane-1-sulfonate = acetaldehyde + sulfite + H(+). The protein operates within organosulfur degradation; alkanesulfonate degradation. In terms of biological role, involved in an anaerobic respiration pathway that converts the sulfonate isethionate (2-hydroxyethanesulfonate) to ammonia, acetate and sulfide. Catalyzes the radical-mediated C-S bond cleavage of isethionate (2-hydroxyethanesulfonate) to form sulfite and acetaldehyde. In Oleidesulfovibrio alaskensis (strain ATCC BAA-1058 / DSM 17464 / G20) (Desulfovibrio alaskensis), this protein is Isethionate sulfite-lyase.